The following is a 149-amino-acid chain: 3-dehydroquinate dehydratase (149 aa).

Residue Tyr-26 is the Proton acceptor of the active site. The substrate site is built by Asn-77, His-83, and Asp-90. His-103 functions as the Proton donor in the catalytic mechanism. Substrate is bound by residues 104 to 105 and Arg-114; that span reads LS.

The protein belongs to the type-II 3-dehydroquinase family. In terms of assembly, homododecamer.

The catalysed reaction is 3-dehydroquinate = 3-dehydroshikimate + H2O. It participates in metabolic intermediate biosynthesis; chorismate biosynthesis; chorismate from D-erythrose 4-phosphate and phosphoenolpyruvate: step 3/7. Functionally, catalyzes a trans-dehydration via an enolate intermediate. The polypeptide is 3-dehydroquinate dehydratase (Haemophilus influenzae (strain 86-028NP)).